Consider the following 66-residue polypeptide: Phylloseptin-S2 (66 aa).

The signal sequence occupies residues 1-22 (MAFLKKSLFLVLFLGLVSLSIC). A propeptide spanning residues 23-46 (EEEKRETEEEEHDQEEDDKSEEKR) is cleaved from the precursor. Residues 25-44 (EKRETEEEEHDQEEDDKSEE) are disordered. The segment covering 30-41 (EEEEHDQEEDDK) has biased composition (acidic residues). Residue F65 is modified to Phenylalanine amide.

Expressed by the skin glands.

The protein resides in the secreted. It localises to the target cell membrane. In terms of biological role, antimicrobial peptide with high activity against Gram-positive bacteria, moderate activity against Gram-negative bacteria, and moderate activity against fungi. Acts by causing bacterial membrane disruption inducing leakage of the intracellular content followed by cell death. It adopts an alpha-helical amphipathic structure in membrane environments. Also shows highly potent antiparasitic activity against Leishmania species. Shows moderate hemolytic activity on human erythrocytes (LC(50)=25 uM). Is also active on human monocytes (IC(50)=22.5 uM). This is Phylloseptin-S2 from Phyllomedusa sauvagei (Sauvage's leaf frog).